A 200-amino-acid chain; its full sequence is Dephospho-CoA kinase (200 aa).

Residues 3–200 enclose the DPCK domain; it reads KVGLTGGIGS…EELQRRLHSR (198 aa). Position 11 to 16 (11 to 16) interacts with ATP; that stretch reads GSGKSS.

This sequence belongs to the CoaE family.

Its subcellular location is the cytoplasm. The enzyme catalyses 3'-dephospho-CoA + ATP = ADP + CoA + H(+). It functions in the pathway cofactor biosynthesis; coenzyme A biosynthesis; CoA from (R)-pantothenate: step 5/5. Its function is as follows. Catalyzes the phosphorylation of the 3'-hydroxyl group of dephosphocoenzyme A to form coenzyme A. This is Dephospho-CoA kinase from Thermobifida fusca (strain YX).